The sequence spans 806 residues: Exonuclease 1 (806 aa).

An N-domain region spans residues 1–99 (MGIQGLLQFI…KSRRERRQAN (99 aa)). 7 residues coordinate Mg(2+): D30, D78, E150, D152, D171, D173, and D225. Residues 138 to 229 (RTRGVDCVVA…ILSGCDYLQS (92 aa)) form an I-domain region. Disordered stretches follow at residues 337-426 (RIDD…EDTS), 443-475 (HCPE…PFRP), and 512-754 (ETQE…SPGL). Positions 355–378 (RSSSWNDRCDKTATTQASIWSQNY) are enriched in polar residues. The span at 412–425 (PQRESQVKRPREDT) shows a compositional bias: basic and acidic residues. Composition is skewed to polar residues over residues 447-458 (TQPTTKPLTNDN), 533-542 (SQSGGDTSSL), and 578-589 (WSGTTKELNKSV). Over residues 592 to 601 (PARDSTERQR) the composition is skewed to basic and acidic residues. A compositionally biased stretch (polar residues) spans 602–615 (SSSTPSGLSTLQQF). Residues 651–670 (SQDSAYFSQSSSISASVENS) are compositionally biased toward low complexity. The span at 676 to 685 (NSDKEKERDS) shows a compositional bias: basic and acidic residues. The segment covering 686 to 696 (VVSNSPSSSPL) has biased composition (low complexity). Residues 744 to 754 (KNVNNENSPGL) show a composition bias toward polar residues.

The protein belongs to the XPG/RAD2 endonuclease family. EXO1 subfamily. Mg(2+) is required as a cofactor.

The protein resides in the nucleus. Its function is as follows. 5'-&gt;3' double-stranded DNA exonuclease which may also contain a cryptic 3'-&gt;5' double-stranded DNA exonuclease activity. Also exhibits endonuclease activity against 5'-overhanging flap structures similar to those generated by displacement synthesis when DNA polymerase encounters the 5'-end of a downstream Okazaki fragment. Required for DNA mismatch repair (MMR). This is Exonuclease 1 (exo1) from Danio rerio (Zebrafish).